The primary structure comprises 254 residues: Segregation and condensation protein A (254 aa).

It belongs to the ScpA family. In terms of assembly, component of a cohesin-like complex composed of ScpA, ScpB and the Smc homodimer, in which ScpA and ScpB bind to the head domain of Smc. The presence of the three proteins is required for the association of the complex with DNA.

The protein localises to the cytoplasm. In terms of biological role, participates in chromosomal partition during cell division. May act via the formation of a condensin-like complex containing Smc and ScpB that pull DNA away from mid-cell into both cell halves. This Clostridium tetani (strain Massachusetts / E88) protein is Segregation and condensation protein A.